A 109-amino-acid polypeptide reads, in one-letter code: U4-lycotoxin-Ls1a (109 aa).

Residues 1-22 form the signal peptide; that stretch reads MKVLVLFSVLFLTLFSYSSTEA. A propeptide spanning residues 23 to 44 is cleaved from the precursor; the sequence is IDELDSDAEEDMLSLMANEQVR. The interval 45–88 is knottin domain; sequence AKACTPRLHDCSHDRHSCCRGELFKDVCYCFYPEGEDKTEVCSC. 4 disulfide bridges follow: Cys-48–Cys-63, Cys-55–Cys-72, Cys-62–Cys-88, and Cys-74–Cys-86. Residues 89-108 form a linear cationic cytotoxin domain region; the sequence is QQPKSHKYIEKVVDKAKTVV.

This sequence belongs to the neurotoxin 19 (CSTX) family. 05 (U4-Lctx) subfamily. In terms of tissue distribution, expressed by the venom gland.

It localises to the secreted. Functionally, enhances the high-affinity desensitization of human P2RX3 purinoceptors. This chain is U4-lycotoxin-Ls1a, found in Lycosa singoriensis (Wolf spider).